Consider the following 124-residue polypeptide: S-adenosylmethionine decarboxylase proenzyme (124 aa).

Residue S63 is the Schiff-base intermediate with substrate; via pyruvic acid of the active site. Pyruvic acid (Ser); by autocatalysis is present on S63. H68 (proton acceptor; for processing activity) is an active-site residue. The active-site Proton donor; for catalytic activity is C83.

The protein belongs to the prokaryotic AdoMetDC family. Type 1 subfamily. In terms of assembly, heterotetramer of two alpha and two beta chains arranged as a dimer of alpha/beta heterodimers. The cofactor is pyruvate. Is synthesized initially as an inactive proenzyme. Formation of the active enzyme involves a self-maturation process in which the active site pyruvoyl group is generated from an internal serine residue via an autocatalytic post-translational modification. Two non-identical subunits are generated from the proenzyme in this reaction, and the pyruvate is formed at the N-terminus of the alpha chain, which is derived from the carboxyl end of the proenzyme. The post-translation cleavage follows an unusual pathway, termed non-hydrolytic serinolysis, in which the side chain hydroxyl group of the serine supplies its oxygen atom to form the C-terminus of the beta chain, while the remainder of the serine residue undergoes an oxidative deamination to produce ammonia and the pyruvoyl group blocking the N-terminus of the alpha chain.

It catalyses the reaction S-adenosyl-L-methionine + H(+) = S-adenosyl 3-(methylsulfanyl)propylamine + CO2. The protein operates within amine and polyamine biosynthesis; S-adenosylmethioninamine biosynthesis; S-adenosylmethioninamine from S-adenosyl-L-methionine: step 1/1. In terms of biological role, catalyzes the decarboxylation of S-adenosylmethionine to S-adenosylmethioninamine (dcAdoMet), the propylamine donor required for the synthesis of the polyamines spermine and spermidine from the diamine putrescine. This Caldicellulosiruptor bescii (strain ATCC BAA-1888 / DSM 6725 / KCTC 15123 / Z-1320) (Anaerocellum thermophilum) protein is S-adenosylmethionine decarboxylase proenzyme.